A 350-amino-acid chain; its full sequence is GTPase Obg (350 aa).

The 159-residue stretch at 1–159 (MKFLDQAKIY…RWIWLRLKLI (159 aa)) folds into the Obg domain. Positions 160 to 328 (ADVGLVGLPN…VLRLLQDRVT (169 aa)) constitute an OBG-type G domain. GTP contacts are provided by residues 166–173 (GLPNAGKS), 191–195 (FTTLH), 213–216 (DIPG), 280–283 (NKID), and 309–311 (SGV). Positions 173 and 193 each coordinate Mg(2+). Positions 331-350 (REAARDAAPPQAAAGREETA) are disordered.

It belongs to the TRAFAC class OBG-HflX-like GTPase superfamily. OBG GTPase family. Monomer. It depends on Mg(2+) as a cofactor.

The protein localises to the cytoplasm. Functionally, an essential GTPase which binds GTP, GDP and possibly (p)ppGpp with moderate affinity, with high nucleotide exchange rates and a fairly low GTP hydrolysis rate. Plays a role in control of the cell cycle, stress response, ribosome biogenesis and in those bacteria that undergo differentiation, in morphogenesis control. The chain is GTPase Obg from Gluconacetobacter diazotrophicus (strain ATCC 49037 / DSM 5601 / CCUG 37298 / CIP 103539 / LMG 7603 / PAl5).